A 319-amino-acid polypeptide reads, in one-letter code: Ribonuclease Z (319 aa).

Residues His62, His64, Asp66, His67, His145, Asp215, and His273 each contribute to the Zn(2+) site. Asp66 serves as the catalytic Proton acceptor.

This sequence belongs to the RNase Z family. As to quaternary structure, homodimer. Requires Zn(2+) as cofactor.

It catalyses the reaction Endonucleolytic cleavage of RNA, removing extra 3' nucleotides from tRNA precursor, generating 3' termini of tRNAs. A 3'-hydroxy group is left at the tRNA terminus and a 5'-phosphoryl group is left at the trailer molecule.. Its function is as follows. Zinc phosphodiesterase, which displays some tRNA 3'-processing endonuclease activity. Probably involved in tRNA maturation, by removing a 3'-trailer from precursor tRNA. This Borrelia hermsii (strain HS1 / DAH) protein is Ribonuclease Z.